The sequence spans 150 residues: Large ribosomal subunit protein bL9 (150 aa).

The protein belongs to the bacterial ribosomal protein bL9 family.

Binds to the 23S rRNA. The sequence is that of Large ribosomal subunit protein bL9 from Polynucleobacter asymbioticus (strain DSM 18221 / CIP 109841 / QLW-P1DMWA-1) (Polynucleobacter necessarius subsp. asymbioticus).